The chain runs to 51 residues: MFDDLPPLSHQEQQRAVEEIQKLMAEGMSTAQAIKIIAEKIRAEHKAQSSK.

This sequence belongs to the UPF0181 family.

The sequence is that of UPF0181 protein VV2_0310 from Vibrio vulnificus (strain CMCP6).